Reading from the N-terminus, the 318-residue chain is Methionyl-tRNA formyltransferase (318 aa).

Residue 112-115 coordinates (6S)-5,6,7,8-tetrahydrofolate; that stretch reads SILP.

This sequence belongs to the Fmt family.

The catalysed reaction is L-methionyl-tRNA(fMet) + (6R)-10-formyltetrahydrofolate = N-formyl-L-methionyl-tRNA(fMet) + (6S)-5,6,7,8-tetrahydrofolate + H(+). In terms of biological role, attaches a formyl group to the free amino group of methionyl-tRNA(fMet). The formyl group appears to play a dual role in the initiator identity of N-formylmethionyl-tRNA by promoting its recognition by IF2 and preventing the misappropriation of this tRNA by the elongation apparatus. In Shewanella baltica (strain OS195), this protein is Methionyl-tRNA formyltransferase.